The following is a 37-amino-acid chain: Cytochrome b6-f complex subunit 5 (37 aa).

A helical membrane pass occupies residues 5–25; sequence LLCGIVLGLIPITLMGLFVAA.

It belongs to the PetG family. In terms of assembly, the 4 large subunits of the cytochrome b6-f complex are cytochrome b6, subunit IV (17 kDa polypeptide, PetD), cytochrome f and the Rieske protein, while the 4 small subunits are PetG, PetL, PetM and PetN. The complex functions as a dimer.

It is found in the cellular thylakoid membrane. Functionally, component of the cytochrome b6-f complex, which mediates electron transfer between photosystem II (PSII) and photosystem I (PSI), cyclic electron flow around PSI, and state transitions. PetG is required for either the stability or assembly of the cytochrome b6-f complex. This is Cytochrome b6-f complex subunit 5 from Synechococcus sp. (strain CC9311).